A 233-amino-acid chain; its full sequence is Archaetidylserine synthase (233 aa).

Helical transmembrane passes span 7–27, 29–49, 75–95, 102–122, 126–146, 147–167, 180–200, and 206–226; these read ITSFIALPDLLSMLNASSGYL, ILLSIDGSLNAACILMLLAVL, SLSDVISFGVAPAILIYSAAV, ILVGPLIVLCGILRLSRFNVL, GKNFTGLPIPVAAVTISSFYL, TGFYSELSAAFIMIAVSVLMI, ASTALILIIATIISVAAVEIL, and VAGPVAIILFIATLTYIAVPI.

This sequence belongs to the CDP-alcohol phosphatidyltransferase class-I family.

The protein localises to the membrane. The catalysed reaction is CDP-2,3-bis-O-(geranylgeranyl)-sn-glycerol + L-serine = archaetidylserine + CMP + H(+). It carries out the reaction CDP-2,3-bis-O-(phytanyl)-sn-glycerol + L-serine = 2,3-bis-O-phytanyl-sn-glycero-3-phospho-L-serine + CMP + H(+). The protein operates within membrane lipid metabolism; glycerophospholipid metabolism. Its activity is regulated as follows. Activated by Mn(2+) ions. Its function is as follows. Involved in the lipid biosynthesis. Catalyzes the formation of unsaturated archaetidylserine from CDP-unsaturated archaeol and L-serine. Activity with ester-linked substrate analogs containing straight aliphatic chains (typical bacterial substrates) is two to three times higher than that with the corresponding ether-type substrate (typical archaeal substrates). Both enantiomers of CDP-unsaturated archaeols with ether-linked geranylgeranyl chains and CDP-saturated archaeol with ether-linked phytanyl chains are similarly active. The enzyme also accepts D-serine, although activity is only about third of that with L-serine. The polypeptide is Archaetidylserine synthase (Methanothermobacter thermautotrophicus (strain ATCC 29096 / DSM 1053 / JCM 10044 / NBRC 100330 / Delta H) (Methanobacterium thermoautotrophicum)).